Here is a 302-residue protein sequence, read N- to C-terminus: Heme A synthase (302 aa).

Topologically, residues 1–8 (MFSKKNLK) are cytoplasmic. The chain crosses the membrane as a helical span at residues 9 to 29 (WLSVLATVIMAFVQLGGALVT). Residues 30 to 67 (KTGSADGCGSDWPLCHGAFLPQNLPIQTLIELSHRAVS) are Extracellular-facing. Cys37 and Cys44 are oxidised to a cystine. Glu60 is an active-site residue. His63 is a binding site for heme o. Residues 68 to 88 (GLSLIVVLWLVIVAWKHIGYI) form a helical membrane-spanning segment. Over 89-93 (KEVKP) the chain is Cytoplasmic. The chain crosses the membrane as a helical span at residues 94 to 114 (LSCISVGFLLIQALVGAAAVM). Over 115-122 (WQQNAYVL) the chain is Extracellular. The helical transmembrane segment at 123 to 143 (ALHFGISLISFSSVFVLTLII) threads the bilayer. His125 lines the heme o pocket. Over 144–161 (YEVDRKYEADELFIRKPL) the chain is Cytoplasmic. The chain crosses the membrane as a helical span at residues 162-182 (RIYTWIMALIVYMTIYTGALV). Over 183-215 (RHKEASLAYGQWPLPFNDLMPHNVQDWVNLTHR) the chain is Extracellular. His214 serves as a coordination point for heme b. A helical membrane pass occupies residues 216–236 (GMALIAFIWILITFIHAVNNY). Over 237–244 (RENRTIRY) the chain is Cytoplasmic. A helical transmembrane segment spans residues 245 to 265 (GYTAAFILVILQVTTGALSII). Over 266-271 (TEVNLF) the chain is Extracellular. Residues 272–292 (IALLHALFITLLFGLIAYFII) form a helical membrane-spanning segment. His276 contributes to the heme b binding site. Topologically, residues 293-302 (LMLRTIRSGG) are cytoplasmic.

It belongs to the COX15/CtaA family. Type 1 subfamily. Interacts with CtaB. Requires heme b as cofactor.

It is found in the cell membrane. The catalysed reaction is Fe(II)-heme o + 2 A + H2O = Fe(II)-heme a + 2 AH2. The protein operates within porphyrin-containing compound metabolism; heme A biosynthesis; heme A from heme O: step 1/1. Catalyzes the conversion of heme O to heme A by two successive hydroxylations of the methyl group at C8. The first hydroxylation forms heme I, the second hydroxylation results in an unstable dihydroxymethyl group, which spontaneously dehydrates, resulting in the formyl group of heme A. This Staphylococcus saprophyticus subsp. saprophyticus (strain ATCC 15305 / DSM 20229 / NCIMB 8711 / NCTC 7292 / S-41) protein is Heme A synthase.